A 344-amino-acid polypeptide reads, in one-letter code: S-adenosylmethionine:tRNA ribosyltransferase-isomerase (344 aa).

Belongs to the QueA family. In terms of assembly, monomer.

The protein resides in the cytoplasm. It carries out the reaction 7-aminomethyl-7-carbaguanosine(34) in tRNA + S-adenosyl-L-methionine = epoxyqueuosine(34) in tRNA + adenine + L-methionine + 2 H(+). It participates in tRNA modification; tRNA-queuosine biosynthesis. In terms of biological role, transfers and isomerizes the ribose moiety from AdoMet to the 7-aminomethyl group of 7-deazaguanine (preQ1-tRNA) to give epoxyqueuosine (oQ-tRNA). The sequence is that of S-adenosylmethionine:tRNA ribosyltransferase-isomerase from Thiobacillus denitrificans (strain ATCC 25259 / T1).